The primary structure comprises 206 residues: Protein Nef (206 aa).

A disordered region spans residues M1 to S46. The N-myristoyl glycine; by host moiety is linked to residue G2. S6 carries the post-translational modification Phosphoserine; by host. An acidic; interacts with host PACS1 and PACS2; stabilizes the interaction of NEF/MHC-I with host AP1M1; necessary for MHC-I internalization region spans residues Q61–E65. The tract at residues P69 to P78 is SH3-binding; interaction with Src family tyrosine kinases. Positions P72–P75 match the PxxP; stabilizes the interaction of NEF/MHC-I with host AP1M1; necessary for MHC-I internalization motif. The tract at residues D108 to W124 is mediates dimerization, Nef-PTE1 interaction. The tract at residues V148–V180 is binding to ATP6V1H. The Dileucine internalization motif; necessary for CD4 internalization motif lies at L164 to L165. The Diacidic; necessary for CD4 internalization signature appears at E174–D175.

It belongs to the lentivirus primate group Nef protein family. As to quaternary structure, monomer; cytosolic form. Homodimer; membrane bound form. Interacts with Nef associated p21-activated kinase (PAK2); this interaction activates PAK2. Associates with the Nef-MHC-I-AP1 complex; this complex is required for MHC-I internalization. Interacts (via C-terminus) with host PI3-kinase. Interacts with host PACS1; this interaction seems to be weak. Interacts with host PACS2. Interacts with host LCK and MAPK3; these interactions inhibit the kinase activity of the latter. Interacts with host ATP6V1H; this interaction may play a role in CD4 endocytosis. Associates with the CD4-Nef-AP2 complex; this complex is required for CD4 internalization. Interacts with host AP2 subunit alpha and AP2 subunit sigma2. Interacts with TCR-zeta chain; this interaction up-regulates the Fas ligand (FasL) surface expression. Interacts with host HCK, LYN, and SRC; these interactions activate the Src family kinases. Interacts with MAP3K5; this interaction inhibits the Fas and TNFR-mediated death signals. Interacts with beta-COP and PTE1. Interacts with human RACK1; this increases Nef phosphorylation by PKC. Interacts with TP53; this interaction decreases the half-life of TP53, protecting the infected cell against p53-mediated apoptosis. The virion-associated Nef proteins are cleaved by the viral protease to release the soluble C-terminal core protein. Nef is probably cleaved concomitantly with viral structural proteins on maturation of virus particles. In terms of processing, myristoylated. Post-translationally, phosphorylated on serine residues, probably by host PKCdelta and theta.

Its subcellular location is the host cell membrane. The protein resides in the virion. The protein localises to the secreted. It is found in the host Golgi apparatus membrane. Functionally, factor of infectivity and pathogenicity, required for optimal virus replication. Alters numerous pathways of T-lymphocyte function and down-regulates immunity surface molecules in order to evade host defense and increase viral infectivity. Alters the functionality of other immunity cells, like dendritic cells, monocytes/macrophages and NK cells. In terms of biological role, in infected CD4(+) T-lymphocytes, down-regulates the surface MHC-I, mature MHC-II, CD4, CD28, CCR5 and CXCR4 molecules. Mediates internalization and degradation of host CD4 through the interaction of with the cytoplasmic tail of CD4, the recruitment of AP-2 (clathrin adapter protein complex 2), internalization through clathrin coated pits, and subsequent transport to endosomes and lysosomes for degradation. Diverts host MHC-I molecules to the trans-Golgi network-associated endosomal compartments by an endocytic pathway to finally target them for degradation. MHC-I down-regulation may involve AP-1 (clathrin adapter protein complex 1) or possibly Src family kinase-ZAP70/Syk-PI3K cascade recruited by PACS2. In consequence infected cells are masked for immune recognition by cytotoxic T-lymphocytes. Decreasing the number of immune receptors also prevents reinfection by more HIV particles (superinfection). Down-regulates host SERINC3 and SERINC5 thereby excluding these proteins from the viral particles. Virion infectivity is drastically higher when SERINC3 or SERINC5 are excluded from the viral envelope, because these host antiviral proteins impair the membrane fusion event necessary for subsequent virion penetration. Bypasses host T-cell signaling by inducing a transcriptional program nearly identical to that of anti-CD3 cell activation. Interaction with TCR-zeta chain up-regulates the Fas ligand (FasL). Increasing surface FasL molecules and decreasing surface MHC-I molecules on infected CD4(+) cells send attacking cytotoxic CD8+ T-lymphocytes into apoptosis. Its function is as follows. Plays a role in optimizing the host cell environment for viral replication without causing cell death by apoptosis. Protects the infected cells from apoptosis in order to keep them alive until the next virus generation is ready to strike. Inhibits the Fas and TNFR-mediated death signals by blocking MAP3K5/ASK1. Decreases the half-life of TP53, protecting the infected cell against p53-mediated apoptosis. Inhibits the apoptotic signals regulated by the Bcl-2 family proteins through the formation of a Nef/PI3-kinase/PAK2 complex that leads to activation of PAK2 and induces phosphorylation of host BAD. Functionally, extracellular Nef protein targets CD4(+) T-lymphocytes for apoptosis by interacting with CXCR4 surface receptors. The protein is Protein Nef of Human immunodeficiency virus type 1 group M subtype C (isolate 92BR025) (HIV-1).